The primary structure comprises 69 residues: Cytochrome c oxidase subunit 8A, mitochondrial (69 aa).

The N-terminal 25 residues, 1-25 (MSVLTPLLLRSLTGSARRLMVPRAQ), are a transit peptide targeting the mitochondrion. The SIFI-degron motif lies at 2–19 (SVLTPLLLRSLTGSARRL). Residues 26–36 (VHSKPAREQLG) lie on the Mitochondrial matrix side of the membrane. A helical transmembrane segment spans residues 37–60 (VLDITIGLTSCFVCCLLPAGWVLS). The Mitochondrial intermembrane portion of the chain corresponds to 61–69 (HLESYKKRE).

It belongs to the cytochrome c oxidase VIII family. In terms of assembly, component of the cytochrome c oxidase (complex IV, CIV), a multisubunit enzyme composed of 14 subunits. The complex is composed of a catalytic core of 3 subunits MT-CO1, MT-CO2 and MT-CO3, encoded in the mitochondrial DNA, and 11 supernumerary subunits COX4I, COX5A, COX5B, COX6A, COX6B, COX6C, COX7A, COX7B, COX7C, COX8 and NDUFA4, which are encoded in the nuclear genome. The complex exists as a monomer or a dimer and forms supercomplexes (SCs) in the inner mitochondrial membrane with NADH-ubiquinone oxidoreductase (complex I, CI) and ubiquinol-cytochrome c oxidoreductase (cytochrome b-c1 complex, complex III, CIII), resulting in different assemblies (supercomplex SCI(1)III(2)IV(1) and megacomplex MCI(2)III(2)IV(2)). In terms of processing, in response to mitochondrial stress, the precursor protein is ubiquitinated by the SIFI complex in the cytoplasm before mitochondrial import, leading to its degradation. Within the SIFI complex, UBR4 initiates ubiquitin chain that are further elongated or branched by KCMF1.

The protein resides in the mitochondrion inner membrane. Its pathway is energy metabolism; oxidative phosphorylation. In terms of biological role, component of the cytochrome c oxidase, the last enzyme in the mitochondrial electron transport chain which drives oxidative phosphorylation. The respiratory chain contains 3 multisubunit complexes succinate dehydrogenase (complex II, CII), ubiquinol-cytochrome c oxidoreductase (cytochrome b-c1 complex, complex III, CIII) and cytochrome c oxidase (complex IV, CIV), that cooperate to transfer electrons derived from NADH and succinate to molecular oxygen, creating an electrochemical gradient over the inner membrane that drives transmembrane transport and the ATP synthase. Cytochrome c oxidase is the component of the respiratory chain that catalyzes the reduction of oxygen to water. Electrons originating from reduced cytochrome c in the intermembrane space (IMS) are transferred via the dinuclear copper A center (CU(A)) of subunit 2 and heme A of subunit 1 to the active site in subunit 1, a binuclear center (BNC) formed by heme A3 and copper B (CU(B)). The BNC reduces molecular oxygen to 2 water molecules using 4 electrons from cytochrome c in the IMS and 4 protons from the mitochondrial matrix. The sequence is that of Cytochrome c oxidase subunit 8A, mitochondrial (Cox8a) from Mus musculus (Mouse).